Here is a 159-residue protein sequence, read N- to C-terminus: Major strawberry allergen Fra a 1-C (159 aa).

It belongs to the BetVI family. As to quaternary structure, monomer.

The protein is Major strawberry allergen Fra a 1-C of Fragaria ananassa (Strawberry).